Here is an 822-residue protein sequence, read N- to C-terminus: DNA gyrase subunit A (822 aa).

In terms of domain architecture, Topo IIA-type catalytic spans 32–497 (LPDVRDGLKP…QVLSLEDEDL (466 aa)). The active-site O-(5'-phospho-DNA)-tyrosine intermediate is Tyr120. The short motif at 524-530 (QKRGGRG) is the GyrA-box element.

This sequence belongs to the type II topoisomerase GyrA/ParC subunit family. In terms of assembly, heterotetramer, composed of two GyrA and two GyrB chains. In the heterotetramer, GyrA contains the active site tyrosine that forms a transient covalent intermediate with DNA, while GyrB binds cofactors and catalyzes ATP hydrolysis.

It is found in the cytoplasm. The catalysed reaction is ATP-dependent breakage, passage and rejoining of double-stranded DNA.. A type II topoisomerase that negatively supercoils closed circular double-stranded (ds) DNA in an ATP-dependent manner to modulate DNA topology and maintain chromosomes in an underwound state. Negative supercoiling favors strand separation, and DNA replication, transcription, recombination and repair, all of which involve strand separation. Also able to catalyze the interconversion of other topological isomers of dsDNA rings, including catenanes and knotted rings. Type II topoisomerases break and join 2 DNA strands simultaneously in an ATP-dependent manner. This is DNA gyrase subunit A from Streptococcus pneumoniae (strain ATCC BAA-255 / R6).